The primary structure comprises 613 residues: Zinc metalloproteinase-disintegrin-like atragin (613 aa).

A signal peptide spans 1 to 20 (MIQALLVIICLAVFPHQGSS). The propeptide occupies 21 to 191 (IILESGNVND…DESIEKTSQL (171 aa)). The region spanning 205 to 400 (KYIEFYVVVD…DRPQCILNKP (196 aa)) is the Peptidase M12B domain. Ca(2+)-binding residues include glutamate 208 and aspartate 292. Disulfide bonds link cysteine 316-cysteine 395 and cysteine 356-cysteine 379. Residues histidine 341, histidine 345, and histidine 351 each contribute to the Zn(2+) site. Positions 395, 398, 410, 413, 415, 417, 420, and 423 each coordinate Ca(2+). Positions 408 to 494 (PPICGNYFVE…ECPTDVFQRN (87 aa)) constitute a Disintegrin domain. Disulfide bonds link cysteine 411/cysteine 440, cysteine 422/cysteine 435, cysteine 424/cysteine 430, cysteine 434/cysteine 457, cysteine 448/cysteine 454, cysteine 453/cysteine 479, cysteine 466/cysteine 486, cysteine 473/cysteine 505, cysteine 498/cysteine 510, cysteine 517/cysteine 567, cysteine 532/cysteine 575, cysteine 542/cysteine 577, cysteine 545/cysteine 555, cysteine 562/cysteine 601, and cysteine 595/cysteine 606. Residue asparagine 436 is glycosylated (N-linked (GlcNAc...) asparagine). Residues 472-474 (DCD) carry the D/ECD-tripeptide motif. 5 residues coordinate Ca(2+): aspartate 474, leucine 475, glutamate 477, aspartate 489, and valine 490. Residues 560–574 (VKCGRLFCKRRNSMI) are hypervariable region that may play important roles toward cell migration.

The protein belongs to the venom metalloproteinase (M12B) family. P-III subfamily. P-IIIa sub-subfamily. In terms of assembly, monomer. It depends on Zn(2+) as a cofactor. Expressed by the venom gland.

The protein localises to the secreted. Functionally, snake venom zinc metalloproteinase that seems to inhibit cell migration. This activity is dominated by the local structure of the hyper-variable region. The protein is Zinc metalloproteinase-disintegrin-like atragin of Naja atra (Chinese cobra).